The sequence spans 297 residues: Cell division protein FtsQ (297 aa).

At 1-33 (MRPLSFRRRTAQARPDPAPSRLSYRVQRLLLTP) the chain is on the cytoplasmic side. A helical transmembrane segment spans residues 34–54 (LFHALIRVGLPAFVLAFGVGW). Residues 55–297 (LLQNQELRDE…IRGLTNDRIE (243 aa)) are Periplasmic-facing. The 69-residue stretch at 82–150 (FMVNAMSVSG…GILAIEIVER (69 aa)) folds into the POTRA domain.

The protein belongs to the FtsQ/DivIB family. FtsQ subfamily.

The protein resides in the cell inner membrane. In terms of biological role, essential cell division protein. This Dinoroseobacter shibae (strain DSM 16493 / NCIMB 14021 / DFL 12) protein is Cell division protein FtsQ.